The following is a 349-amino-acid chain: Methylthioribose-1-phosphate isomerase (349 aa).

Residues 51–53, R94, and Q199 each bind substrate; that span reads RGA. Residue D240 is the Proton donor of the active site. 250 to 251 contributes to the substrate binding site; sequence NK.

Belongs to the EIF-2B alpha/beta/delta subunits family. MtnA subfamily. In terms of assembly, homodimer.

It catalyses the reaction 5-(methylsulfanyl)-alpha-D-ribose 1-phosphate = 5-(methylsulfanyl)-D-ribulose 1-phosphate. It participates in amino-acid biosynthesis; L-methionine biosynthesis via salvage pathway; L-methionine from S-methyl-5-thio-alpha-D-ribose 1-phosphate: step 1/6. Its function is as follows. Catalyzes the interconversion of methylthioribose-1-phosphate (MTR-1-P) into methylthioribulose-1-phosphate (MTRu-1-P). The chain is Methylthioribose-1-phosphate isomerase from Bacillus mycoides (strain KBAB4) (Bacillus weihenstephanensis).